The following is a 415-amino-acid chain: Lipoyl synthase, mitochondrial (415 aa).

A mitochondrion-targeting transit peptide spans 1–32 (MAASTNRLRFLYSSARTVPQTGSITPISRRTY). Residues 20–32 (QTGSITPISRRTY) are compositionally biased toward polar residues. The tract at residues 20 to 53 (QTGSITPISRRTYATTEPSPSATGAPATARKRTN) is disordered. The segment covering 33-47 (ATTEPSPSATGAPAT) has biased composition (low complexity). [4Fe-4S] cluster-binding residues include Cys132, Cys137, Cys143, Cys163, Cys167, Cys170, and Ser378. A Radical SAM core domain is found at 146 to 367 (GSDKSAATAT…RQRALDMGFL (222 aa)). The tract at residues 395–415 (AAGTAGESVTDSKAAVDEATR) is disordered.

The protein belongs to the radical SAM superfamily. Lipoyl synthase family. The cofactor is [4Fe-4S] cluster.

It localises to the mitochondrion. The catalysed reaction is [[Fe-S] cluster scaffold protein carrying a second [4Fe-4S](2+) cluster] + N(6)-octanoyl-L-lysyl-[protein] + 2 oxidized [2Fe-2S]-[ferredoxin] + 2 S-adenosyl-L-methionine + 4 H(+) = [[Fe-S] cluster scaffold protein] + N(6)-[(R)-dihydrolipoyl]-L-lysyl-[protein] + 4 Fe(3+) + 2 hydrogen sulfide + 2 5'-deoxyadenosine + 2 L-methionine + 2 reduced [2Fe-2S]-[ferredoxin]. It participates in protein modification; protein lipoylation via endogenous pathway; protein N(6)-(lipoyl)lysine from octanoyl-[acyl-carrier-protein]: step 2/2. Functionally, catalyzes the radical-mediated insertion of two sulfur atoms into the C-6 and C-8 positions of the octanoyl moiety bound to the lipoyl domains of lipoate-dependent enzymes, thereby converting the octanoylated domains into lipoylated derivatives. This Aspergillus flavus (strain ATCC 200026 / FGSC A1120 / IAM 13836 / NRRL 3357 / JCM 12722 / SRRC 167) protein is Lipoyl synthase, mitochondrial.